The following is a 286-amino-acid chain: Bifunctional protein FolD (286 aa).

Residues 165-167 (GRS), serine 190, and isoleucine 231 contribute to the NADP(+) site.

It belongs to the tetrahydrofolate dehydrogenase/cyclohydrolase family. As to quaternary structure, homodimer.

The enzyme catalyses (6R)-5,10-methylene-5,6,7,8-tetrahydrofolate + NADP(+) = (6R)-5,10-methenyltetrahydrofolate + NADPH. It carries out the reaction (6R)-5,10-methenyltetrahydrofolate + H2O = (6R)-10-formyltetrahydrofolate + H(+). It participates in one-carbon metabolism; tetrahydrofolate interconversion. Its function is as follows. Catalyzes the oxidation of 5,10-methylenetetrahydrofolate to 5,10-methenyltetrahydrofolate and then the hydrolysis of 5,10-methenyltetrahydrofolate to 10-formyltetrahydrofolate. The chain is Bifunctional protein FolD from Thermodesulfovibrio yellowstonii (strain ATCC 51303 / DSM 11347 / YP87).